Consider the following 147-residue polypeptide: Ribosome-binding factor A (147 aa).

Residues 127-147 (AAEARHAGEPDPYKTDRDDAE) form a disordered region.

Belongs to the RbfA family. Monomer. Binds 30S ribosomal subunits, but not 50S ribosomal subunits or 70S ribosomes.

It localises to the cytoplasm. One of several proteins that assist in the late maturation steps of the functional core of the 30S ribosomal subunit. Associates with free 30S ribosomal subunits (but not with 30S subunits that are part of 70S ribosomes or polysomes). Required for efficient processing of 16S rRNA. May interact with the 5'-terminal helix region of 16S rRNA. In Nocardia farcinica (strain IFM 10152), this protein is Ribosome-binding factor A.